We begin with the raw amino-acid sequence, 102 residues long: Putative septation protein SpoVG (102 aa).

The tract at residues 83–102 is disordered; the sequence is TDEVIPDKNATSDNEESDEA.

Belongs to the SpoVG family.

Its function is as follows. Could be involved in septation. This is Putative septation protein SpoVG from Staphylococcus epidermidis (strain ATCC 35984 / DSM 28319 / BCRC 17069 / CCUG 31568 / BM 3577 / RP62A).